Here is a 415-residue protein sequence, read N- to C-terminus: Dihydroorotase (415 aa).

Zn(2+) is bound by residues His54 and His56. Substrate contacts are provided by residues 56–58 and Asn88; that span reads HFR. Residues Lys136, His169, His217, and Asp278 each coordinate Zn(2+). Lys136 carries the N6-carboxylysine modification. Asp278 is an active-site residue. His282 is a binding site for substrate.

This sequence belongs to the metallo-dependent hydrolases superfamily. DHOase family. Class I DHOase subfamily. Requires Zn(2+) as cofactor.

It carries out the reaction (S)-dihydroorotate + H2O = N-carbamoyl-L-aspartate + H(+). The protein operates within pyrimidine metabolism; UMP biosynthesis via de novo pathway; (S)-dihydroorotate from bicarbonate: step 3/3. Functionally, catalyzes the reversible cyclization of carbamoyl aspartate to dihydroorotate. This Thermoplasma volcanium (strain ATCC 51530 / DSM 4299 / JCM 9571 / NBRC 15438 / GSS1) protein is Dihydroorotase.